The following is a 574-amino-acid chain: MANPPHGGVLKDLLARDAPRHDELEMEAEKLPAIVLTERQLCDLELIMNGGFSPLEGFMNQKDYDSVCENVRLADGNLFSMPITLDVSQAVIDEGKLKPGSRVTLRDFRDDRNLAILTIDDIYRPDKAKEAKLVFGGDEEHPAIKYLYNKVQEFYVGGKIEAINKLNHYDYVALRYTPAELRVHFDKLGWNRVVAFQTRNPMHRAHRELTVRAARARQANVLIHPVVGLTKPGDIDHFTRVRAYQALLPRYPNGMAVLGLLGLAMRMGGPREAIWHAIIRKNHGATHFIVGRDHAGPGKNSKGQEFYGPYDAQHAVEKYREELGIEVVEFQQVTYLPDTDEYKPKDEVPPGVKTLDISGTELRNRLRTGAPIPEWFSYPEVVKILRESSPPRHTQGFTIFLTGYMNSGKDAIARALQVTLNQQGGRSVSLLLGDTVRHELSSELGFSREDRHTNIQRIAFVAGELTRAGAAVIASPIAPYEESRNAARDAVTQAGGNFFLVHVATPLEYCEKTDKRGIYAKARRGEIKGFTGVDDPYETPSKADLTVDVSKQTVRSIVHEIILMLETEGFFDRS.

The interval 1 to 169 is N-terminal; sequence MANPPHGGVL…IEAINKLNHY (169 aa). Positions 170-394 are catalytic; sequence DYVALRYTPA…LRESSPPRHT (225 aa). Gln197 contacts sulfate. ATP-binding positions include 197–200 and 291–294; these read QTRN and GRDH. Catalysis depends on residues Thr198, Arg199, and Asn200. Arg199 contacts sulfate. Ala295 is a binding site for sulfate. Val333 provides a ligand contact to ATP. The interval 395–574 is allosteric regulation domain; adenylyl-sulfate kinase-like; the sequence is QGFTIFLTGY…LETEGFFDRS (180 aa). 3'-phosphoadenylyl sulfate is bound by residues 434–437, Arg451, 477–478, and Arg516; these read DTVR and IA.

This sequence in the N-terminal section; belongs to the sulfate adenylyltransferase family. In the C-terminal section; belongs to the APS kinase family. Homohexamer. Dimer of trimers.

The protein localises to the cytoplasm. The catalysed reaction is sulfate + ATP + H(+) = adenosine 5'-phosphosulfate + diphosphate. The protein operates within sulfur metabolism; hydrogen sulfide biosynthesis; sulfite from sulfate: step 1/3. Allosterically inhibited by 3'-phosphoadenosine 5'-phosphosulfate (PAPS). Catalyzes the first intracellular reaction of sulfate assimilation, forming adenosine-5'-phosphosulfate (APS) from inorganic sulfate and ATP. Plays an important role in sulfate activation as a component of the biosynthesis pathway of sulfur-containing amino acids. This Aspergillus fumigatus (strain ATCC MYA-4609 / CBS 101355 / FGSC A1100 / Af293) (Neosartorya fumigata) protein is Sulfate adenylyltransferase.